Here is a 310-residue protein sequence, read N- to C-terminus: Cytochrome f (310 aa).

The first 23 residues, 1-23 (MRRLIPILLGSLVLSLSILVAPA), serve as a signal peptide directing secretion. 4 residues coordinate heme: Y28, C48, C51, and H52. A helical transmembrane segment spans residues 277 to 297 (IYGLLAFFVAVSLAQILLVLK).

Belongs to the cytochrome f family. As to quaternary structure, the 4 large subunits of the cytochrome b6-f complex are cytochrome b6, subunit IV (17 kDa polypeptide, PetD), cytochrome f and the Rieske protein, while the 4 small subunits are PetG, PetL, PetM and PetN. The complex functions as a dimer. Heme is required as a cofactor.

The protein resides in the cellular thylakoid membrane. In terms of biological role, component of the cytochrome b6-f complex, which mediates electron transfer between photosystem II (PSII) and photosystem I (PSI), cyclic electron flow around PSI, and state transitions. The sequence is that of Cytochrome f from Prochlorococcus marinus (strain MIT 9303).